We begin with the raw amino-acid sequence, 267 residues long: Undecaprenyl-diphosphatase (267 aa).

8 consecutive transmembrane segments (helical) span residues 1–21 (MSYF…FLPI), 39–59 (QGLA…VIYF), 83–103 (AKLA…GLLM), 111–131 (LRSA…LWWV), 144–164 (AGWK…IPGT), 189–209 (FLMS…KLVT), 218–238 (TLLT…HFFL), and 246–266 (MTPF…FLMM).

The protein belongs to the UppP family.

The protein resides in the cell inner membrane. The catalysed reaction is di-trans,octa-cis-undecaprenyl diphosphate + H2O = di-trans,octa-cis-undecaprenyl phosphate + phosphate + H(+). In terms of biological role, catalyzes the dephosphorylation of undecaprenyl diphosphate (UPP). Confers resistance to bacitracin. In Vibrio atlanticus (strain LGP32) (Vibrio splendidus (strain Mel32)), this protein is Undecaprenyl-diphosphatase.